Reading from the N-terminus, the 124-residue chain is Large ribosomal subunit protein eL33 (124 aa).

Alanine 2 carries the N-acetylalanine modification.

Belongs to the eukaryotic ribosomal protein eL33 family.

The sequence is that of Large ribosomal subunit protein eL33 from Caenorhabditis elegans.